A 376-amino-acid chain; its full sequence is Lipoprotein p33 (376 aa).

A signal peptide spans 1–30; the sequence is MKIKKIKLLKALALTGAFGIVATVPVIVSS. The N-palmitoyl cysteine moiety is linked to residue C31. C31 carries the S-diacylglycerol cysteine lipid modification. The disordered stretch occupies residues 33-59; the sequence is STDNNGGTGDNNTGGGGSGTDQQQGTT. A compositionally biased stretch (gly residues) spans 38–51; sequence GGTGDNNTGGGGSG.

It belongs to the p35 lipoprotein family.

Its subcellular location is the cell membrane. The polypeptide is Lipoprotein p33 (Malacoplasma penetrans (strain HF-2) (Mycoplasma penetrans)).